We begin with the raw amino-acid sequence, 497 residues long: Casein kinase I isoform delta (497 aa).

Disordered stretches follow at residues 1 to 58 and 86 to 109; these read MATM…EEMN and PIQQ…HPTQ. The span at 14–34 shows a compositional bias: polar residues; that stretch reads WHNNTSTPMDTTEPATNSHNP. A compositionally biased stretch (low complexity) spans 88–105; it reads QQHQQPPLLQQAQPSQIP. Residues 191–458 enclose the Protein kinase domain; the sequence is FRLGRKIGSG…YLRNLFRTLF (268 aa). Residues 197–205 and Lys220 each bind ATP; that span reads IGSGSFGDI. Catalysis depends on Asp310, which acts as the Proton acceptor.

It belongs to the protein kinase superfamily. CK1 Ser/Thr protein kinase family. Casein kinase I subfamily. Monomer. Expressed throughout larval development and into the adult stage in both hypodermal seam cells and the hermaphrodite specific neuron.

Its subcellular location is the cytoplasm. The protein resides in the nucleus. It localises to the chromosome. It is found in the centromere. The protein localises to the cell junction. Its subcellular location is the adherens junction. The catalysed reaction is L-seryl-[protein] + ATP = O-phospho-L-seryl-[protein] + ADP + H(+). It catalyses the reaction L-threonyl-[protein] + ATP = O-phospho-L-threonyl-[protein] + ADP + H(+). Exhibits substrate-dependent heparin activation. Essential serine/threonine-protein kinase that regulates diverse cellular growth and survival processes including Wnt signaling, DNA repair and circadian rhythms. Casein kinases are operationally defined by their preferential utilization of acidic proteins. Positively regulates the expression of components of the heterochronic pathway, which regulate developmental timing, such as the transcriptional repressor lin-42 and microRNAs such as let-7. Negatively regulates cell cycle exit and cell fusion to prevent the premature differentiation of hypodermal seam cells into adult cells. Plays a role in regulating axon branching and subsequently, the maturation of the nervous system, most likely by preventing the premature termination of transcripts for proteins such as Ankyrin/unc-44, which are required for maintaining the nervous system. May phosphorylate ssup-72 to promote nervous system maturation. The chain is Casein kinase I isoform delta from Caenorhabditis elegans.